The sequence spans 656 residues: Chaperone protein DnaK (656 aa).

Threonine 204 carries the phosphothreonine; by autocatalysis modification. Residues 607–656 (VYAKKGGAAGAPPGGEAEGEPQAQAGGKKEDVVDAEFEEVKDEKKKDEDK) form a disordered region. Positions 620–632 (GGEAEGEPQAQAG) are enriched in low complexity. A compositionally biased stretch (basic and acidic residues) spans 647–656 (KDEKKKDEDK).

It belongs to the heat shock protein 70 family.

Its function is as follows. Acts as a chaperone. The sequence is that of Chaperone protein DnaK from Coxiella burnetii (strain CbuK_Q154) (Coxiella burnetii (strain Q154)).